The primary structure comprises 34 residues: Photosystem I reaction center subunit XII (34 aa).

Residues Ile-10–Tyr-32 form a helical membrane-spanning segment.

It belongs to the PsaM family.

It localises to the cellular thylakoid membrane. The protein is Photosystem I reaction center subunit XII of Synechococcus sp. (strain RCC307).